Here is a 162-residue protein sequence, read N- to C-terminus: uncharacterized protein (162 aa).

Residues 65-76 (EEKPLEVAQDRN) are compositionally biased toward basic and acidic residues. The segment at 65–93 (EEKPLEVAQDRNNKRKAPSHLEPAHDFIS) is disordered.

This is an uncharacterized protein from Bacillus subtilis (strain 168).